We begin with the raw amino-acid sequence, 193 residues long: Probable GTP-binding protein EngB (193 aa).

Residues 24–193 (NIPEIALAGR…ELKAALAELL (170 aa)) form the EngB-type G domain. Residues 32-39 (GRSNVGKS), 59-63 (GKTRT), 77-80 (DLPG), 144-147 (TKAD), and 174-176 (FSA) contribute to the GTP site. Mg(2+) is bound by residues S39 and T61.

This sequence belongs to the TRAFAC class TrmE-Era-EngA-EngB-Septin-like GTPase superfamily. EngB GTPase family. Mg(2+) is required as a cofactor.

Its function is as follows. Necessary for normal cell division and for the maintenance of normal septation. This chain is Probable GTP-binding protein EngB, found in Syntrophomonas wolfei subsp. wolfei (strain DSM 2245B / Goettingen).